Consider the following 375-residue polypeptide: Putative type I specificity subunit S.MpnORF638P (375 aa).

It belongs to the type-I restriction system S methylase family. In terms of assembly, the methyltransferase is composed of M and S polypeptides.

Its function is as follows. The specificity (S) subunit of a type I methyltransferase (MTase); this subunit dictates DNA sequence specificity. The single R subunit has multiple frameshifts and is probably not expressed. The chain is Putative type I specificity subunit S.MpnORF638P from Mycoplasma pneumoniae (strain ATCC 29342 / M129 / Subtype 1) (Mycoplasmoides pneumoniae).